Consider the following 313-residue polypeptide: Trimeric intracellular cation channel type 1B.2 (313 aa).

The Lumenal segment spans residues 1–28 (MGWVPDEWSIDHDTLIDAGGYVQKLKLY). Residues 29–48 (PYFDAAHYVLTCLSVRHDLG) traverse the membrane as a helical segment. Residues 49–57 (PDAISFSRK) are Cytoplasmic-facing. A discontinuously helical transmembrane segment spans residues 58 to 82 (HPFSCWLSCMLMSFAGSFLSCFLLG). Residues 83 to 90 (EPIISPLK) are Lumenal-facing. A helical transmembrane segment spans residues 91–108 (QHADILLGSIVWYLVFYS). The Cytoplasmic segment spans residues 109–118 (PFDVVFRLAT). A helical membrane pass occupies residues 119-149 (WFPVKLGLSVLKEVQRTHKIAAGVKHAVRIY). A 1,2-diacyl-sn-glycero-3-phospho-(1D-myo-inositol-4,5-bisphosphate)-binding residues include K130 and R134. The Lumenal segment spans residues 150 to 151 (PE). Residues 152–178 (SYLVQILVGVAKGAGSGVVKIVEQLAR) form a discontinuously helical membrane-spanning segment. G168 is an a 1,2-diacyl-sn-glycero-3-phospho-(1D-myo-inositol-4,5-bisphosphate) binding site. Topologically, residues 179 to 192 (GTWHPTNHEILRPS) are cytoplasmic. The chain crosses the membrane as a helical span at residues 193-210 (FTTKACVIASIVFTLERH). Residues 211-216 (SMYVTA) lie on the Lumenal side of the membrane. The helical transmembrane segment at 217-239 (PHDLVYLCVVGFFIYFKLASLCL) threads the bilayer. Topologically, residues 240–313 (SVHDVLMPIE…MSNGTDKKNN (74 aa)) are cytoplasmic.

Belongs to the TMEM38 family. As to quaternary structure, homotrimer; trimerization probably requires binding to phosphatidylinositol 4,5-bisphosphate (PIP2).

It localises to the endoplasmic reticulum membrane. Functionally, potassium channel that mediates transmembrane potassium transport. Might be required for maintenance of rapid intracellular calcium release. May act as a potassium counter-ion channel that functions in synchronization with calcium release from intracellular stores. Binds phosphatidylinositol 4,5-bisphosphate (PIP2). The protein is Trimeric intracellular cation channel type 1B.2 of Caenorhabditis elegans.